The following is a 265-amino-acid chain: uncharacterized protein (265 aa).

Serine 223 carries the post-translational modification Phosphoserine.

This is an uncharacterized protein from Saccharomyces cerevisiae (strain ATCC 204508 / S288c) (Baker's yeast).